Here is an 806-residue protein sequence, read N- to C-terminus: Sucrose synthase (806 aa).

The tract at residues 275-752 (MVFNVVILSP…GLQRIEEKYT (478 aa)) is GT-B glycosyltransferase.

This sequence belongs to the glycosyltransferase 1 family. Plant sucrose synthase subfamily.

It catalyses the reaction an NDP-alpha-D-glucose + D-fructose = a ribonucleoside 5'-diphosphate + sucrose + H(+). Its function is as follows. Sucrose-cleaving enzyme that provides UDP-glucose and fructose for various metabolic pathways. The polypeptide is Sucrose synthase (SUCS) (Vicia faba (Broad bean)).